A 222-amino-acid polypeptide reads, in one-letter code: Phosphoenolpyruvate guanylyltransferase (222 aa).

The phosphoenolpyruvate site is built by T147, G163, and S166.

Belongs to the CofC family.

The catalysed reaction is phosphoenolpyruvate + GTP + H(+) = enolpyruvoyl-2-diphospho-5'-guanosine + diphosphate. It participates in cofactor biosynthesis; coenzyme F420 biosynthesis. Guanylyltransferase that catalyzes the activation of phosphoenolpyruvate (PEP) as enolpyruvoyl-2-diphospho-5'-guanosine, via the condensation of PEP with GTP. It is involved in the biosynthesis of coenzyme F420, a hydride carrier cofactor. The sequence is that of Phosphoenolpyruvate guanylyltransferase from Streptosporangium roseum (strain ATCC 12428 / DSM 43021 / JCM 3005 / KCTC 9067 / NCIMB 10171 / NRRL 2505 / NI 9100).